The following is a 39-amino-acid chain: U-limacoditoxin(13)-As54 (39 aa).

Positions 1 to 23 (MSKYIVLLVVSAIALLQFSMIEC) are cleaved as a signal peptide. The residue at position 37 (Phe37) is a Phenylalanine amide.

This sequence belongs to the FARP (FMRFamide related peptide) family. Expressed by the venom secretory cell of the spine. The spine is a cuticular structure containing a single large nucleated venom-secreting cell at its base. It is an independent unit capable of producing, storing and injecting venom. On the back of A.stimulea caterpillars, spines are grouped together by 50 to 100 to form scoli, of which there are eight.

The protein localises to the secreted. Functionally, strongly activates (at 30 uM) the human neuropeptide FF receptor 1 (NPFF1R), a G-protein coupled receptor, with an effect that is equipotent to the endogenous RFRP-1 ligand in activating NPFFR1. Is toxic when injected into Drosophila melanogaster. Also shows a moderate anthelmintic activity against the parasitic nematode H.contortus (drug susceptible Kirby isolate) (IC(50)=20.1 uM). The sequence is that of U-limacoditoxin(13)-As54 from Acharia stimulea (Saddleback caterpillar moth).